The primary structure comprises 196 residues: Ribonuclease HII (196 aa).

An RNase H type-2 domain is found at 15–196; sequence FILAGIDEAG…RLSFTKALYK (182 aa). A divalent metal cation is bound by residues aspartate 21, glutamate 22, and aspartate 112.

The protein belongs to the RNase HII family. It depends on Mn(2+) as a cofactor. The cofactor is Mg(2+).

It is found in the cytoplasm. The enzyme catalyses Endonucleolytic cleavage to 5'-phosphomonoester.. In terms of biological role, endonuclease that specifically degrades the RNA of RNA-DNA hybrids. In Rickettsia bellii (strain OSU 85-389), this protein is Ribonuclease HII.